We begin with the raw amino-acid sequence, 360 residues long: uncharacterized protein (360 aa).

7 helical membrane passes run 26–48 (SVCYLGSACVSVAVVCVVWSGAT), 58–80 (LHPLTSASFSTAIFTFVMCASVL), 89–111 (VMGLRAELAITAAILTLGHNIAH), 126–148 (LSTGFLVAGAVSMVLVLLMSILA), 169–191 (RLAYLFYGLTYVHLSFILLPTAL), 195–214 (IPSVVSYVLYTVIFATYALL), and 227–249 (CALCSAAVAVSFVAFVLGASHMV).

The protein localises to the cell membrane. This is an uncharacterized protein from Treponema pallidum (strain Nichols).